Reading from the N-terminus, the 416-residue chain is Glutamyl-tRNA reductase (416 aa).

Substrate contacts are provided by residues 50 to 53 (TCNR), serine 109, 114 to 116 (EPQ), and glutamine 120. Residue cysteine 51 is the Nucleophile of the active site. Position 189–194 (189–194 (GAGEMI)) interacts with NADP(+).

Belongs to the glutamyl-tRNA reductase family. In terms of assembly, homodimer.

It carries out the reaction (S)-4-amino-5-oxopentanoate + tRNA(Glu) + NADP(+) = L-glutamyl-tRNA(Glu) + NADPH + H(+). Its pathway is porphyrin-containing compound metabolism; protoporphyrin-IX biosynthesis; 5-aminolevulinate from L-glutamyl-tRNA(Glu): step 1/2. In terms of biological role, catalyzes the NADPH-dependent reduction of glutamyl-tRNA(Glu) to glutamate 1-semialdehyde (GSA). This is Glutamyl-tRNA reductase from Ruthia magnifica subsp. Calyptogena magnifica.